The following is a 396-amino-acid chain: MAKAKFERTKPHVNIGTIGHVDHGKTTLTAAISKVLYDKYPDLNEKRDFASIDSAPEERQRGITINISHVEYQTEKRHYAHVDAPGHADYIKNMITGAAQMDGAILVVAATDGPMAQTREHVLLARQVGVPYLLVALNKSDMVDDEELLDLVEMEVRELLSSQGFDGDEAPVVRVSGLKALEGDPVWVKSVEDLMAAVDESVPDPVRDRDKPFLMPIEDVFTITGRGTVVTGRAERGTLAINSEVEIVGIRPVQKTTVTGIEMFHKQLDEAWAGENCGLLLRGLKRDDVERGQVVVKPGSITPHTDFEANVYILSKDEGGRHNPFYSNYRPQFYFRTTDVTGVITLPEGTEMVMPGDNTEMTVALIQPIAMEEGLGFAIREGGRTVGSGRVTKIIK.

In terms of domain architecture, tr-type G spans K10–V206. A G1 region spans residues G19–T26. Position 19 to 26 (G19 to T26) interacts with GTP. T26 contributes to the Mg(2+) binding site. Residues G62 to N66 are G2. Residues D83–G86 form a G3 region. GTP contacts are provided by residues D83–H87 and N138–D141. A G4 region spans residues N138–D141. Residues S176–L178 are G5.

It belongs to the TRAFAC class translation factor GTPase superfamily. Classic translation factor GTPase family. EF-Tu/EF-1A subfamily. Monomer.

The protein resides in the cytoplasm. The enzyme catalyses GTP + H2O = GDP + phosphate + H(+). Its function is as follows. GTP hydrolase that promotes the GTP-dependent binding of aminoacyl-tRNA to the A-site of ribosomes during protein biosynthesis. This chain is Elongation factor Tu, found in Pseudarthrobacter chlorophenolicus (strain ATCC 700700 / DSM 12829 / CIP 107037 / JCM 12360 / KCTC 9906 / NCIMB 13794 / A6) (Arthrobacter chlorophenolicus).